The chain runs to 892 residues: Dystroglycan 1 (892 aa).

A signal peptide spans 1-27 (MRMSAGLSLLLPLWGRTFLLLLSVAMA). Over 28–750 (QSHWPSEAGR…SSEDDVYLHT (723 aa)) the chain is Extracellular. Positions 30–405 (HWPSEAGRDW…GQIRPTMTIP (376 aa)) are required for laminin recognition. The tract at residues 46–68 (SMHSVLSDLHEAVPTVVGIPDGI) is O-glycosylated at one site. N-linked (GlcNAc...) asparagine glycosylation occurs at Asn-138. Cysteines 179 and 261 form a disulfide. Positions 313–482 (ATPTPVTAIG…PPTRIRTTTS (170 aa)) are mucin-like domain. O-linked (Man6P...) threonine glycans are attached at residues Thr-314, Thr-316, and Thr-376. The interval 378-497 (TLGPIQPTRV…GEPNQRPELK (120 aa)) is disordered. Positions 410 to 444 (PTAVATPPTTTTKKPRVSTPKPATPSTDSSTTTTR) are enriched in low complexity. The O-glycosylated at seven sites with GalNAc stretch occupies residues 460–482 (TTKAPITRLETASPPTRIRTTTS). The region spanning 600-709 (RAPARFKAKF…SSIAVTGSGS (110 aa)) is the Peptidase S72 domain. Asn-638, Asn-646, and Asn-658 each carry an N-linked (GlcNAc...) asparagine glycan. A disulfide bridge connects residues Cys-666 and Cys-710. A disordered region spans residues 721-742 (PRRVPSEVPSTDVPDRDPEKSS). Positions 733 to 742 (VPDRDPEKSS) are enriched in basic and acidic residues. A helical membrane pass occupies residues 751–771 (VIPAVVVAAILLIAGIIAMIC). The Cytoplasmic portion of the chain corresponds to 772–892 (YRKKRKGKLT…YRSPPPYVPP (121 aa)). A Nuclear localization signal motif is present at residues 773–779 (RKKRKGK). At Thr-787 the chain carries Phosphothreonine. The segment at 816–892 (LQEEKAPLPP…YRSPPPYVPP (77 aa)) is required for interaction with CAV3. The disordered stretch occupies residues 820–892 (KAPLPPPEYP…YRSPPPYVPP (73 aa)). A compositionally biased stretch (polar residues) spans 829-843 (PNQSVPETTPLNQDT). A compositionally biased stretch (pro residues) spans 856-867 (NAPPYQPPPPFT). The required for binding DMD and UTRN stretch occupies residues 877-892 (PKNMTPYRSPPPYVPP). The PPXY motif motif lies at 886–889 (PPPY). Residue Tyr-889 is modified to Phosphotyrosine; by SRC.

As to quaternary structure, monomer. Heterodimer of alpha- and beta-dystroglycan subunits which are the central components of the dystrophin-glycoprotein complex. This complex then can form a dystrophin-associated glycoprotein complex (DGC) which is composed of three subcomplexes: a cytoplasmic complex comprised of DMD (or UTRN), DTNA and a number of syntrophins, such as SNTB1, SNTB2, SNTG1 and SNTG2, the transmembrane dystroglycan complex, and the sarcoglycan-sarcospan complex. Interacts (via the N-terminal of alphaDAG1) with LARGE1; the interaction enhances laminin binding. Interacts with SGCD. Interacts with AGR2 and AGR3. Interacts (betaDAG1) with DMD; the interaction is inhibited by phosphorylation on the PPXY motif. Interacts (betaDAG1, via its PPXY motif) with UTRN (via its WWW and ZZ domains); the interaction is inhibited by phosphorylation on the PPXY motif. Interacts (betaDAG1, via its phosphorylated PPXY motif) with the SH2 domain-containing proteins, FYN, CSK, NCK and SHC. Interacts (betaDAG1) with CAV3 (via a central WW-like domain); the interaction disrupts the binding of DMD. BetaDAG1 directly interacts with ANK3, but not with ANK2; this interaction does not interfere with DMD-binding and is required for retention at costameres. Identified in a dystroglycan complex that contains at least PRX, DRP2, UTRN, DMD and DAG1. Interacts with POMGNT1. BetaDAG1 interacts with CD93. O-glycosylated. POMGNT1 catalyzes the initial addition of N-acetylglucosamine, giving rise to the GlcNAc(beta1-2)Man(alpha1-)O-Ser/Thr moiety and thus providing the necessary basis for the addition of further carbohydrate moieties. Heavily O-glycosylated comprising of up to two thirds of its mass and the carbohydrate composition differs depending on tissue type. Mucin-type O-glycosylation is important for ligand binding activity. O-mannosylation is found in high abundance in both brain and muscle where the most abundant glycan is Sia-alpha-2-3-Gal-beta-1-4-Glc-NAc-beta-1-2-Man. In muscle, glycosylation on Thr-314, Thr-316 and Thr-376 by a phosphorylated O-mannosyl glycan with the structure 2-(N-acetylamido)-2-deoxygalactosyl-beta-1,3-2-(N-acetylamido)-2-deoxyglucosyl-beta-1,4-6-phosphomannose is mediated by like-acetylglucosaminyltransferase (LARGE1) protein amd is required for laminin binding. O-glycosylated in the N-terminal region with a core 1 or possibly core 8 glycan. The brain form displays a unique glycosylation pattern which is absent in other tissues; this form shows enhanced binding to laminin LAMA5 compared to the skeletal muscle form. In terms of processing, N-glycosylated. Post-translationally, autolytic cleavage produces the alpha and beta subunits. In cutaneous cells, as well as in certain pathological conditions, shedding of beta-dystroglycan can occur releasing a peptide of about 30 kDa. SRC-mediated phosphorylation of the PPXY motif of the beta subunit recruits SH2 domain-containing proteins, but inhibits binding to WWW domain-containing proteins, DMD and UTRN. This phosphorylation also inhibits nuclear entry.

Its subcellular location is the secreted. It localises to the extracellular space. The protein resides in the cell membrane. It is found in the cytoplasm. The protein localises to the cytoskeleton. Its subcellular location is the nucleus. It localises to the nucleoplasm. The protein resides in the sarcolemma. It is found in the postsynaptic cell membrane. In terms of biological role, the dystroglycan complex is involved in a number of processes including laminin and basement membrane assembly, sarcolemmal stability, cell survival, peripheral nerve myelination, nodal structure, cell migration, and epithelial polarization. Its function is as follows. Extracellular peripheral glycoprotein that acts as a receptor for extracellular matrix proteins containing laminin-G domains. Receptor for laminin-2 (LAMA2) and agrin in peripheral nerve Schwann cells. Also acts as a receptor for laminin LAMA5. Transmembrane protein that plays important roles in connecting the extracellular matrix to the cytoskeleton. Acts as a cell adhesion receptor in both muscle and non-muscle tissues. Receptor for both DMD and UTRN and, through these interactions, scaffolds axin to the cytoskeleton. Also functions in cell adhesion-mediated signaling and implicated in cell polarity. This is Dystroglycan 1 from Canis lupus familiaris (Dog).